Reading from the N-terminus, the 234-residue chain is Small ribosomal subunit protein eS4 (234 aa).

The S4 RNA-binding domain maps to 37 to 99 (VPLLIVLRDV…REEYYRVFPG (63 aa)).

It belongs to the eukaryotic ribosomal protein eS4 family.

This Haloarcula marismortui (strain ATCC 43049 / DSM 3752 / JCM 8966 / VKM B-1809) (Halobacterium marismortui) protein is Small ribosomal subunit protein eS4 (rps4e).